A 154-amino-acid polypeptide reads, in one-letter code: OCIA domain-containing protein 2 (154 aa).

The interval 1–22 is disordered; the sequence is MASASARGNQDKDAHFPPPSKQ. The OCIA domain maps to 1 to 120; the sequence is MASASARGNQ…HFFEDQLRGA (120 aa). K41 is modified (N6-acetyllysine).

As to quaternary structure, interacts (via OCIA domain) with OCIAD1/ASRIJ and STAT3.

Its subcellular location is the endosome. The protein localises to the mitochondrion. It is found in the mitochondrion inner membrane. Functionally, has an essential role in the assembly of mitochondrial respiratory chain complex III. Is also required for STAT3 activation and plays a role in cell migration. The sequence is that of OCIA domain-containing protein 2 (OCIAD2) from Homo sapiens (Human).